A 786-amino-acid polypeptide reads, in one-letter code: Calcium-independent phospholipase A2-gamma (786 aa).

Residue N4 is glycosylated (N-linked (GlcNAc...) asparagine). 3 disordered regions span residues 158–180, 225–285, and 321–348; these read KKYSDKSTEKSPVPEGRNHIIDK, KENS…SLPI, and SKSQAEEQEEPAKSEPAGSKDKTVEEKK. The segment covering 225 to 245 has biased composition (basic and acidic residues); sequence KENSHFQEKSELEGKKVEEGK. Composition is skewed to polar residues over residues 246-258 and 266-285; these read SSSLDPGILTSQA and SAGTMDKATSPSGTPESLPI. A PNPLA domain is found at 449–644; the sequence is LTIDGGGTRG…LLNNPSALAM (196 aa). The short motif at 453–458 is the GXGXXG element; that stretch reads GGGTRG. Residues 483–503 form a helical membrane-spanning segment; the sequence is ICGVSTGAILAFMLGLFHLPL. The GXSXG motif lies at 485-489; the sequence is GVSTG. S487 acts as the Nucleophile in catalysis. The active-site Proton acceptor is D631. The short motif at 631–633 is the DGA/G element; the sequence is DGG. K740 is subject to N6-succinyllysine.

In terms of tissue distribution, expressed in kidney, heart and brain.

It localises to the endoplasmic reticulum membrane. The protein resides in the mitochondrion membrane. It is found in the peroxisome membrane. It carries out the reaction a 1,2-diacyl-sn-glycero-3-phosphocholine + H2O = a 1-acyl-sn-glycero-3-phosphocholine + a fatty acid + H(+). The enzyme catalyses a 1,2-diacyl-sn-glycero-3-phosphocholine + H2O = a 2-acyl-sn-glycero-3-phosphocholine + a fatty acid + H(+). It catalyses the reaction a 1,2-diacyl-sn-glycero-3-phosphoethanolamine + H2O = a 1-acyl-sn-glycero-3-phosphoethanolamine + a fatty acid + H(+). The catalysed reaction is a 1-O-(1Z-alkenyl)-2-acyl-sn-glycero-3-phosphocholine + H2O = a 1-O-(1Z-alkenyl)-sn-glycero-3-phosphocholine + a fatty acid + H(+). It carries out the reaction a 1-acyl-sn-glycero-3-phosphocholine + H2O = sn-glycerol 3-phosphocholine + a fatty acid + H(+). The enzyme catalyses 1-acyl-2-(9Z,12Z)-octadecadienoyl-sn-glycero-3-phosphocholine + H2O = a 1-acyl-sn-glycero-3-phosphocholine + (9Z,12Z)-octadecadienoate + H(+). It catalyses the reaction 1-acyl-2-(5Z,8Z,11Z,14Z-eicosatetraenoyl)-sn-glycero-3-phosphocholine + H2O = a 1-acyl-sn-glycero-3-phosphocholine + (5Z,8Z,11Z,14Z)-eicosatetraenoate + H(+). The catalysed reaction is 1-hexadecanoyl-2-(5Z,8Z,11Z,14Z-eicosatetraenoyl)-sn-glycero-3-phosphocholine + H2O = 1-hexadecanoyl-sn-glycero-3-phosphocholine + (5Z,8Z,11Z,14Z)-eicosatetraenoate + H(+). It carries out the reaction 1-octadecanoyl-2-(9Z-octadecenoyl)-sn-glycero-3-phosphocholine + H2O = 1-octadecanoyl-sn-glycero-3-phosphocholine + (9Z)-octadecenoate + H(+). The enzyme catalyses 1-hexadecanoyl-2-(9Z-octadecenoyl)-sn-glycero-3-phosphocholine + H2O = 1-hexadecanoyl-sn-glycero-3-phosphocholine + (9Z)-octadecenoate + H(+). It catalyses the reaction 1-hexadecanoyl-2-(9Z,12Z-octadecadienoyl)-sn-glycero-3-phosphocholine + H2O = (9Z,12Z)-octadecadienoate + 1-hexadecanoyl-sn-glycero-3-phosphocholine + H(+). The catalysed reaction is 1-acyl-2-(9Z,12Z)-octadecadienoyl-sn-glycero-3-phosphoethanolamine + H2O = a 1-acyl-sn-glycero-3-phosphoethanolamine + (9Z,12Z)-octadecadienoate + H(+). It carries out the reaction 1-acyl-2-(5Z,8Z,11Z,14Z)-eicosatetraenoyl-sn-glycero-3-phosphoethanolamine + H2O = a 1-acyl-sn-glycero-3-phosphoethanolamine + (5Z,8Z,11Z,14Z)-eicosatetraenoate + H(+). The enzyme catalyses 1-hexadecanoyl-2-(5Z,8Z,11Z,14Z-eicosatetraenoyl)-sn-glycero-3-phosphoethanolamine + H2O = 1-hexadecanoyl-sn-glycero-3-phosphoethanolamine + (5Z,8Z,11Z,14Z)-eicosatetraenoate + H(+). It catalyses the reaction 1-hexadecanoyl-2-(5Z,8Z,11Z,14Z-eicosatetraenoyl)-sn-glycero-3-phosphocholine + H2O = 2-(5Z,8Z,11Z,14Z)-eicosatetraenoyl-sn-glycero-3-phosphocholine + hexadecanoate + H(+). The catalysed reaction is 1-octadecanoyl-2-(9Z-octadecenoyl)-sn-glycero-3-phosphocholine + H2O = 2-(9Z-octadecenoyl)-sn-glycero-3-phosphocholine + octadecanoate + H(+). It carries out the reaction 1-hexadecanoyl-2-(4Z,7Z,10Z,13Z,16Z,19Z-docosahexaenoyl)-sn-glycero-3-phosphocholine + H2O = 2-(4Z,7Z,10Z,13Z,16Z,19Z-docosahexaenoyl)-sn-glycero-3-phosphocholine + hexadecanoate + H(+). The enzyme catalyses 1-O-(1Z)-hexadecenyl-2 (5Z,8Z,11Z,14Z)-eicosatetraenoyl-sn-glycero-3-phosphocholine + H2O = 1-(1Z-hexadecenyl)-sn-glycero-3-phosphocholine + (5Z,8Z,11Z,14Z)-eicosatetraenoate + H(+). It catalyses the reaction 1-O-(1Z-hexadecenyl)-2-(9Z-octadecenoyl)-sn-glycero-3-phosphocholine + H2O = 1-(1Z-hexadecenyl)-sn-glycero-3-phosphocholine + (9Z)-octadecenoate + H(+). The catalysed reaction is 1-hexadecanoyl-sn-glycero-3-phosphocholine + H2O = sn-glycerol 3-phosphocholine + hexadecanoate + H(+). It carries out the reaction 1',3'-bis-[1,2-di-(9Z,12Z-octadecadienoyl)-sn-glycero-3-phospho]-glycerol + H2O = 1'-[1,2-di-(9Z,12Z-octadecadienoyl)-sn-glycero-3-phospho]-3'-[1-(9Z,12Z-octadecadienoyl)-sn-glycero-3-phospho]-glycerol + (9Z,12Z)-octadecadienoate + H(+). The enzyme catalyses 1'-[1-acyl-2-(9-hydroxy-(10E,12Z)-octadecadienoyl)-sn-glycero-3-phospho]-3'-[1,2-diacyl-sn-glycero-3-phospho]-glycerol + H2O = 9-hydroxy-(10E,12Z)-octadecadienoate + 1'-[1,2-diacyl-sn-glycero-3-phospho],3'-[1-acyl-sn-glycero-3-phospho]-glycerol + H(+). Its pathway is phospholipid metabolism. Calcium-independent phospholipase. Functionally, calcium-independent and membrane-bound phospholipase, that catalyzes the esterolytic cleavage of fatty acids from glycerophospholipids to yield free fatty acids and lysophospholipids, hence regulating membrane physical properties and the release of lipid second messengers and growth factors. Hydrolyzes phosphatidylethanolamine, phosphatidylcholine and probably phosphatidylinositol with a possible preference for the former. Has also a broad substrate specificity in terms of fatty acid moieties, hydrolyzing saturated and mono-unsaturated fatty acids at nearly equal rates from either the sn-1 or sn-2 position in diacyl phosphatidylcholine. However, has a weak activity toward polyunsaturated fatty acids at the sn-2 position, and thereby favors the production of 2-arachidonoyl lysophosphatidylcholine, a key branch point metabolite in eicosanoid signaling. On the other hand, can produce arachidonic acid from the sn-1 position of diacyl phospholipid and from the sn-2 position of arachidonate-containing plasmalogen substrates. Therefore, plays an important role in the mobilization of arachidonic acid in response to cellular stimuli and the generation of lipid second messengers. Can also hydrolyze lysophosphatidylcholine. In the mitochondrial compartment, catalyzes the hydrolysis and release of oxidized aliphatic chains from cardiolipin and integrates mitochondrial bioenergetics and signaling. It is essential for maintaining efficient bioenergetic mitochondrial function through tailoring mitochondrial membrane lipid metabolism and composition. This is Calcium-independent phospholipase A2-gamma from Oryctolagus cuniculus (Rabbit).